Reading from the N-terminus, the 258-residue chain is Cell division protein ZapD (258 aa).

This sequence belongs to the ZapD family. As to quaternary structure, interacts with FtsZ.

The protein localises to the cytoplasm. Functionally, cell division factor that enhances FtsZ-ring assembly. Directly interacts with FtsZ and promotes bundling of FtsZ protofilaments, with a reduction in FtsZ GTPase activity. The protein is Cell division protein ZapD of Coxiella burnetii (strain RSA 331 / Henzerling II).